The sequence spans 483 residues: Isocitrate dehydrogenase [NADP] (483 aa).

Threonine 74 serves as a coordination point for NADP(+). D-threo-isocitrate-binding residues include serine 83, asparagine 85, arginine 89, arginine 99, and arginine 121. Residue aspartate 232 coordinates Mg(2+). Residues 264 to 270 and asparagine 277 contribute to the NADP(+) site; that span reads HGSAPDI.

Belongs to the isocitrate and isopropylmalate dehydrogenases family. In terms of assembly, homodimer. Requires Mg(2+) as cofactor. The cofactor is Mn(2+).

It carries out the reaction D-threo-isocitrate + NADP(+) = 2-oxoglutarate + CO2 + NADPH. Functionally, catalyzes the oxidative decarboxylation of isocitrate to 2-oxoglutarate and carbon dioxide with the concomitant reduction of NADP(+). This chain is Isocitrate dehydrogenase [NADP] (icd), found in Rickettsia conorii (strain ATCC VR-613 / Malish 7).